The primary structure comprises 525 residues: Lysine--tRNA ligase (525 aa).

Mg(2+)-binding residues include Glu430 and Glu437.

The protein belongs to the class-II aminoacyl-tRNA synthetase family. Homodimer. The cofactor is Mg(2+).

It localises to the cytoplasm. The catalysed reaction is tRNA(Lys) + L-lysine + ATP = L-lysyl-tRNA(Lys) + AMP + diphosphate. This chain is Lysine--tRNA ligase, found in Chlamydia caviae (strain ATCC VR-813 / DSM 19441 / 03DC25 / GPIC) (Chlamydophila caviae).